An 874-amino-acid chain; its full sequence is Chaperone protein ClpB 1 (874 aa).

A Clp R domain is found at 6–148 (PNQFTEKAWE…RQIIQQIRGS (143 aa)). Repeat stretches follow at residues 9-73 (FTEK…IARQ) and 85-148 (LGRS…IRGS). Residues 161–342 (EALEKYGRDL…RRFQQVFVDQ (182 aa)) are NBD1. Residue 208–215 (GEPGVGKT) participates in ATP binding. The tract at residues 343 to 551 (PTVEDTISIL…IAEIISKWTG (209 aa)) is linker. A coiled-coil region spans residues 393–527 (IDLVDESAAR…MEGGLATTHT (135 aa)). The interval 561–772 (EMQKLLNLDE…RVDETIIFHS (212 aa)) is NBD2. 611 to 618 (GPTGVGKT) provides a ligand contact to ATP. The tract at residues 773–874 (LRKDQLQQIV…IATPTAVPLS (102 aa)) is C-terminal.

It belongs to the ClpA/ClpB family. As to quaternary structure, homohexamer. The oligomerization is ATP-dependent.

The protein localises to the cytoplasm. Functionally, part of a stress-induced multi-chaperone system, it is involved in the recovery of the cell from heat-induced damage, in cooperation with DnaK, DnaJ and GrpE. Acts before DnaK, in the processing of protein aggregates. Protein binding stimulates the ATPase activity; ATP hydrolysis unfolds the denatured protein aggregates, which probably helps expose new hydrophobic binding sites on the surface of ClpB-bound aggregates, contributing to the solubilization and refolding of denatured protein aggregates by DnaK. Necessary for thermotolerance. This is Chaperone protein ClpB 1 (clpB1) from Synechococcus elongatus (strain ATCC 33912 / PCC 7942 / FACHB-805) (Anacystis nidulans R2).